The sequence spans 1149 residues: Guanine nucleotide exchange factor DBS (1149 aa).

The CRAL-TRIO domain occupies 52-224 (MATASDEIMH…DLGGTLDYCH (173 aa)). Residues 355 to 454 (HFEQGFREVK…SEVTRRRDLL (100 aa)) form a Spectrin repeat. A phosphoserine mark is found at Ser457, Ser462, Ser471, and Ser480. The stretch at 503-528 (LETGAENKIQELNKIYKEYECILNQD) forms a coiled coil. The segment at 555–627 (KKLAAKQTRP…RTSSTGEEEE (73 aa)) is disordered. The span at 583–594 (PGSWRSSENSSS) shows a compositional bias: low complexity. Basic and acidic residues predominate over residues 607–616 (AKSEMSEPRQ). Ser621 carries the post-translational modification Phosphoserine. The residue at position 622 (Thr622) is a Phosphothreonine. The DH domain maps to 632-812 (LRRHVMNELL…LGILKAVNDS (181 aa)). The PH domain maps to 830 to 946 (KLLMQGSFSV…WVNEIRKVLT (117 aa)). Residues 956–1033 (SQHRALEQSH…EAPEEDGGWS (78 aa)) are disordered. Positions 964-978 (SHSLPLPTPASTSPT) are enriched in low complexity. Residues Ser1033, Ser1034, Ser1041, and Ser1042 each carry the phosphoserine modification. In terms of domain architecture, SH3 spans 1055-1116 (LVPGKYTVLM…PASSLATLLG (62 aa)).

The protein belongs to the MCF2 family. In terms of assembly, interacts with GTP-bound RAC1. Interacts with CDC42. Interacts with RHOA. Interacts with CCPG1, which results in specific inhibition of its exchange activity toward RHOA, but does not affect its activity on CDC42. Post-translationally, mainly phosphorylated on serine. Highest expression in the brain, where it is found in neurons and alpha-tanycytes (at protein level). Detected in brain, and at lower levels in the heart.

It is found in the cytoplasm. Its subcellular location is the cell membrane. Functionally, guanine nucleotide exchange factor that catalyzes guanine nucleotide exchange on RHOA and CDC42, and thereby contributes to the regulation of RHOA and CDC42 signaling pathways. Seems to lack activity with RAC1. Becomes activated and highly tumorigenic by truncation of the N-terminus. This Rattus norvegicus (Rat) protein is Guanine nucleotide exchange factor DBS (Mcf2l).